A 547-amino-acid chain; its full sequence is MASKEIKFGRTAREKMLRGVDILADAVKVTLGPKGRNVIIDKSFGAPRITKDGVSVAKEIELEDKFENMGAQMVREVASKTNDIAGDGTTTATVLAQAIVREGNKAVAAGMNPMDLKRGIDLAVADVVKDLQAKAKKISTSEEVAQVGTISANGDKQVGLDIAEAMQKVGNEGVITVEEAKTAETELEVVEGMQFDRGYLSPYFVTNPEKMIADLEDVFILLHEKKLSNLQSMLPVLEAVVQTGKPLLIIAEDVEGEALATLVVNKLRGGLKIAAVKAPGFGDRRKAMLEDIAILTGGTVISEDLGIKLESVTLDMLGRAKKVSISKENTTIVDGSGAKSDIEGRVAQIKAQIEETTSDYDREKLQERLAKLAGGVAVIRVGGSTEVEVKEKKDRIDDALNATRAAVQEGIVPGGGIALLRSSTKITVKGANDDQEAGINIVRRALQSLVRQIAENAGDEASIVVGKVLDKNEDNYGYNAQTSEFGDMIAMGIVDPLKVVRTALQNAASVASLLITTEAMIAELPKKESAGGGMPGGMGGMGGMDMM.

Residues 30-33, lysine 51, 87-91, glycine 415, and aspartate 495 contribute to the ATP site; these read TLGP and DGTTT.

The protein belongs to the chaperonin (HSP60) family. Forms a cylinder of 14 subunits composed of two heptameric rings stacked back-to-back. Interacts with the co-chaperonin GroES.

It is found in the cytoplasm. The enzyme catalyses ATP + H2O + a folded polypeptide = ADP + phosphate + an unfolded polypeptide.. Its function is as follows. Together with its co-chaperonin GroES, plays an essential role in assisting protein folding. The GroEL-GroES system forms a nano-cage that allows encapsulation of the non-native substrate proteins and provides a physical environment optimized to promote and accelerate protein folding. The chain is Chaperonin GroEL from Rhizobium leguminosarum bv. trifolii (strain WSM2304).